The following is a 317-amino-acid chain: L-lactate dehydrogenase (317 aa).

Residues V17, D38, K43, Y69, and 83 to 84 contribute to the NAD(+) site; that span reads GA. Substrate is bound by residues Q86 and R92. Residues S105, 122–124, and S147 each bind NAD(+); that span reads ATN. 124–127 is a binding site for substrate; it reads NPVD. 152–155 provides a ligand contact to substrate; it reads DTAR. Residues R157 and H172 each coordinate beta-D-fructose 1,6-bisphosphate. H179 functions as the Proton acceptor in the catalytic mechanism. Y224 bears the Phosphotyrosine mark. T233 serves as a coordination point for substrate.

The protein belongs to the LDH/MDH superfamily. LDH family. In terms of assembly, homotetramer.

The protein resides in the cytoplasm. The catalysed reaction is (S)-lactate + NAD(+) = pyruvate + NADH + H(+). It participates in fermentation; pyruvate fermentation to lactate; (S)-lactate from pyruvate: step 1/1. Its activity is regulated as follows. Allosterically activated by fructose 1,6-bisphosphate (FBP). Catalyzes the conversion of lactate to pyruvate. In Geobacillus thermodenitrificans (strain NG80-2), this protein is L-lactate dehydrogenase.